The following is a 108-amino-acid chain: Protein RnfH (108 aa).

The segment at 86–108 is disordered; sequence ARRRRAEKAKEEGRANKVTGGRA.

The protein belongs to the UPF0125 (RnfH) family.

This is Protein RnfH from Pseudoalteromonas atlantica (strain T6c / ATCC BAA-1087).